Consider the following 170-residue polypeptide: Protein HemX (170 aa).

Positions Met-1–Ser-17 are enriched in polar residues. The disordered stretch occupies residues Met-1–Arg-24. Residues Gly-37 to Tyr-57 form a helical membrane-spanning segment.

The protein localises to the cell membrane. In Proteus mirabilis, this protein is Protein HemX.